The following is a 143-amino-acid chain: Hemoglobin subunit alpha (143 aa).

Ser1 is modified (N-acetylserine). A Globin domain is found at 1–143 (SLSATDKARV…LALALSEKYR (143 aa)). His60 serves as a coordination point for O2. His89 serves as a coordination point for heme b.

The protein belongs to the globin family. As to quaternary structure, heterotetramer of two alpha chains and two beta chains. As to expression, red blood cells.

In terms of biological role, involved in oxygen transport from gills to the various peripheral tissues. The chain is Hemoglobin subunit alpha (hba) from Leiostomus xanthurus (Spot).